The chain runs to 178 residues: Inner membrane-spanning protein YciB (178 aa).

The next 5 helical transmembrane spans lie at 10 to 30 (IVLF…AVLM), 47 to 67 (LQTM…LTLA), 76 to 96 (WKPT…LWAL), 121 to 141 (WAWI…VLHW), and 151 to 171 (LWGY…IAPH).

The protein belongs to the YciB family.

It is found in the cell inner membrane. Plays a role in cell envelope biogenesis, maintenance of cell envelope integrity and membrane homeostasis. This chain is Inner membrane-spanning protein YciB, found in Verminephrobacter eiseniae (strain EF01-2).